The following is a 695-amino-acid chain: Polyribonucleotide nucleotidyltransferase (695 aa).

The Mg(2+) site is built by aspartate 486 and aspartate 492. One can recognise a KH domain in the interval 553–612; it reads PRIETMQINTSKIATVIGPGGKQIRQIIERSGAQVDINDDGVINIAASTQESINKAKELI. The 69-residue stretch at 622–690 folds into the S1 motif domain; sequence GKVYNGRVTS…EKGQLKLSHK (69 aa).

The protein belongs to the polyribonucleotide nucleotidyltransferase family. Mg(2+) serves as cofactor.

It localises to the cytoplasm. It catalyses the reaction RNA(n+1) + phosphate = RNA(n) + a ribonucleoside 5'-diphosphate. In terms of biological role, involved in mRNA degradation. Catalyzes the phosphorolysis of single-stranded polyribonucleotides processively in the 3'- to 5'-direction. This Chlamydia trachomatis serovar A (strain ATCC VR-571B / DSM 19440 / HAR-13) protein is Polyribonucleotide nucleotidyltransferase.